Consider the following 274-residue polypeptide: NAD kinase (274 aa).

The active-site Proton acceptor is aspartate 61. NAD(+) contacts are provided by residues 61–62 (DG), lysine 66, 134–135 (ND), lysine 145, aspartate 164, and 175–180 (TAYSLS).

The protein belongs to the NAD kinase family. A divalent metal cation is required as a cofactor.

It localises to the cytoplasm. It carries out the reaction NAD(+) + ATP = ADP + NADP(+) + H(+). Functionally, involved in the regulation of the intracellular balance of NAD and NADP, and is a key enzyme in the biosynthesis of NADP. Catalyzes specifically the phosphorylation on 2'-hydroxyl of the adenosine moiety of NAD to yield NADP. The protein is NAD kinase of Clostridium tetani (strain Massachusetts / E88).